Here is a 514-residue protein sequence, read N- to C-terminus: MKFLLVLIILYNILNSAHSAPTITAVSNGKFGVPTYITITGTGFTGTPVVTIGGQTCDPVIVANTASLQCQFSAQLAPGNSNFDVIVKVGGVPSTGGNGLFKYTPPTLSTIFPNNGRIGMILVDGPSNISGYKLNVNDSINSAMLSVTADSVSPTIYFLVPNTIAGGLLNLELIQPFGFSTIVTSKSVFSPTITSITPLAFDLTPTNVTVTGKYFGTTASVTMGSHIYTGLTVQDDGTNCHVIFTTRSVYESSNTITAKASTGVDMIYLDNQGNQQPITFTYNPPTITSTKQVNDSVEISTTNTGTDFTQISLTMGTSSPTNLVITGTNEKIVITLPHALPEGEIQFNLKAGISNVVTSTLLVTPVINSVTQAPHNGGSITISGIFLNNAHVSIVVDQNTTDIVCAPDSNGESIICPVEAGSGTINLVVTNYKNFASDPTIKTEATTSTTYTIPDTPTPTDTATPSPTPTETATPSPTPKPTSTPEETEAPSSATTLISPLSLIVIFISFVLLI.

The signal sequence occupies residues 1–19; that stretch reads MKFLLVLIILYNILNSAHS. A globular region spans residues 20–453; it reads APTITAVSNG…EATTSTTYTI (434 aa). Residues 21–104 form the IPT/TIG 1 domain; that stretch reads PTITAVSNGK…TGGNGLFKYT (84 aa). Asn-128, Asn-137, Asn-207, Asn-294, and Asn-399 each carry an N-linked (GlcNAc...) asparagine glycan. The 93-residue stretch at 191-283 folds into the IPT/TIG 2 domain; that stretch reads PTITSITPLA…NQQPITFTYN (93 aa). Low complexity-rich tracts occupy residues 446–475 and 483–494; these read TTST…TATP and STPEETEAPSSA. The tract at residues 446–494 is disordered; that stretch reads TTSTTYTIPDTPTPTDTATPSPTPTETATPSPTPKPTSTPEETEAPSSA. 2 tandem repeats follow at residues 462–469 and 472–479. The 2 X 8 AA repeats, Pro-rich stretch occupies residues 462–479; sequence TATPSPTPTETATPSPTP. Ser-492 is lipidated: GPI-like-anchor amidated serine. Positions 493-514 are cleaved as a propeptide — removed in mature form; it reads SATTLISPLSLIVIFISFVLLI.

Phosphorylated on serine and N-glycosylated with two types of oligosaccharide chains. Post-translationally, the GPI-like-anchor contains a phosphoceramide group, rather than a phosphatidyl group.

It localises to the cell membrane. This cell-surface glycoprotein mediates cell-cell binding via homophilic interaction. This chain is Contact site A protein (csaA), found in Dictyostelium discoideum (Social amoeba).